The chain runs to 21 residues: TRSSRAGLQFPVGRVHRLLRK.

K21 carries the post-translational modification N6-(2-hydroxyisobutyryl)lysine; alternate.

It belongs to the histone H2A family. In terms of tissue distribution, expressed by the skin glands.

It is found in the secreted. Functionally, antimicrobial peptide with potent activity against some Gram-positive and Gram-negative bacteria. Does not permeabilize membrane, but internalizes into bacterial cells and alter specific gene expression involved in bacterial resistance mechanisms. Has the ability to agglutinate E.coli, and lipid vesicles. Shows a weak hemolytic activity, and is not cytotoxic to monocytes. In Sphaenorhynchus lacteus (Orinoco lime treefrog), this protein is Buforin-2.